A 382-amino-acid polypeptide reads, in one-letter code: Succinate--CoA ligase [ADP-forming] subunit beta (382 aa).

The ATP-grasp domain maps to 9–237 (RDLLARYGIP…PSAEPEAERR (229 aa)). Residues lysine 45, 52-54 (GRG), isoleucine 94, and glutamate 99 contribute to the ATP site. Positions 192 and 206 each coordinate Mg(2+). Substrate-binding positions include asparagine 257 and 314–316 (GIT).

This sequence belongs to the succinate/malate CoA ligase beta subunit family. Heterotetramer of two alpha and two beta subunits. Mg(2+) serves as cofactor.

It catalyses the reaction succinate + ATP + CoA = succinyl-CoA + ADP + phosphate. It carries out the reaction GTP + succinate + CoA = succinyl-CoA + GDP + phosphate. It participates in carbohydrate metabolism; tricarboxylic acid cycle; succinate from succinyl-CoA (ligase route): step 1/1. Its function is as follows. Succinyl-CoA synthetase functions in the citric acid cycle (TCA), coupling the hydrolysis of succinyl-CoA to the synthesis of either ATP or GTP and thus represents the only step of substrate-level phosphorylation in the TCA. The beta subunit provides nucleotide specificity of the enzyme and binds the substrate succinate, while the binding sites for coenzyme A and phosphate are found in the alpha subunit. The protein is Succinate--CoA ligase [ADP-forming] subunit beta of Chloroflexus aggregans (strain MD-66 / DSM 9485).